The primary structure comprises 261 residues: Carbonic anhydrase 1 (261 aa).

Positions 1 to 40 (MASPDWGYDDKNGPEQWSKLYPIANGNNQSPVDIKTSETK) are disordered. Ala2 carries the N-acetylalanine modification. The 258-residue stretch at 4–261 (PDWGYDDKNG…LKGRTVRASF (258 aa)) folds into the Alpha-carbonic anhydrase domain. His65 serves as the catalytic Proton donor/acceptor. Residues His95, His97, and His120 each contribute to the Zn(2+) site. Substrate-binding positions include Thr200 and 200-201 (TH). The tract at residues 241–261 (PMQHNNRPTQPLKGRTVRASF) is disordered.

Belongs to the alpha-carbonic anhydrase family. Zn(2+) serves as cofactor.

It localises to the cytoplasm. It catalyses the reaction hydrogencarbonate + H(+) = CO2 + H2O. The enzyme catalyses urea = cyanamide + H2O. With respect to regulation, inhibited by acetazolamide. Functionally, catalyzes the reversible hydration of carbon dioxide. Can hydrate cyanamide to urea. The protein is Carbonic anhydrase 1 (CA1) of Pan troglodytes (Chimpanzee).